Consider the following 134-residue polypeptide: Small ribosomal subunit protein bS6 (134 aa).

The segment at 99–134 (PSQLAKSADEKRARKAPRSENFDNDQDDESNDDSDE) is disordered. Over residues 105 to 119 (SADEKRARKAPRSEN) the composition is skewed to basic and acidic residues. A compositionally biased stretch (acidic residues) spans 120-134 (FDNDQDDESNDDSDE).

The protein belongs to the bacterial ribosomal protein bS6 family.

Its function is as follows. Binds together with bS18 to 16S ribosomal RNA. In Psychrobacter sp. (strain PRwf-1), this protein is Small ribosomal subunit protein bS6.